The following is a 432-amino-acid chain: D-amino acid dehydrogenase (432 aa).

V3–W17 provides a ligand contact to FAD.

The protein belongs to the DadA oxidoreductase family. It depends on FAD as a cofactor.

The enzyme catalyses a D-alpha-amino acid + A + H2O = a 2-oxocarboxylate + AH2 + NH4(+). It participates in amino-acid degradation; D-alanine degradation; NH(3) and pyruvate from D-alanine: step 1/1. Its function is as follows. Oxidative deamination of D-amino acids. In Escherichia coli O45:K1 (strain S88 / ExPEC), this protein is D-amino acid dehydrogenase.